Consider the following 339-residue polypeptide: UPF0450 protein C17orf58 (339 aa).

The N-terminal stretch at methionine 1–proline 17 is a signal peptide. The segment at proline 17–glutamate 191 is disordered. Positions valine 21–serine 36 are enriched in basic and acidic residues. The span at alanine 56–tryptophan 72 shows a compositional bias: low complexity. A compositionally biased stretch (basic and acidic residues) spans alanine 112–arginine 125. Residues leucine 132 to proline 163 are compositionally biased toward low complexity. Intrachain disulfides connect cysteine 193/cysteine 267, cysteine 197/cysteine 271, and cysteine 208/cysteine 338. An NTR domain is found at cysteine 193–cysteine 338.

The protein belongs to the UPF0450 family.

This chain is UPF0450 protein C17orf58 (C17orf58), found in Homo sapiens (Human).